We begin with the raw amino-acid sequence, 165 residues long: Protein SprT (165 aa).

Positions glutamate 10 to phenylalanine 158 constitute a SprT-like domain. Histidine 69 lines the Zn(2+) pocket. Residue glutamate 70 is part of the active site. Histidine 73 is a binding site for Zn(2+).

Belongs to the SprT family. The cofactor is Zn(2+).

The protein resides in the cytoplasm. The sequence is that of Protein SprT from Pseudomonas aeruginosa (strain UCBPP-PA14).